The following is a 740-amino-acid chain: Ion-translocating oxidoreductase complex subunit C (740 aa).

2 consecutive 4Fe-4S ferredoxin-type domains span residues 369–397 (GEPQ…QQLY) and 407–436 (KATT…VQYF). Residues Cys-377, Cys-380, Cys-383, Cys-387, Cys-416, Cys-419, Cys-422, and Cys-426 each coordinate [4Fe-4S] cluster. Residues 602-716 (KLEQQQANAE…EPEEQVDPRK (115 aa)) are disordered.

This sequence belongs to the 4Fe4S bacterial-type ferredoxin family. RnfC subfamily. The complex is composed of six subunits: RsxA, RsxB, RsxC, RsxD, RsxE and RsxG. [4Fe-4S] cluster serves as cofactor.

The protein localises to the cell inner membrane. Functionally, part of a membrane-bound complex that couples electron transfer with translocation of ions across the membrane. Required to maintain the reduced state of SoxR. The polypeptide is Ion-translocating oxidoreductase complex subunit C (Escherichia coli (strain SE11)).